A 1134-amino-acid chain; its full sequence is Tetrathionate reductase subunit A (1134 aa).

The tat-type signal signal peptide spans 1-31; that stretch reads MQLSRRDFIKGLVAVGSASVFLAGYSETVDR. Positions 46-133 constitute a 4Fe-4S Mo/W bis-MGD-type domain; the sequence is GRIVHSACLG…DGIHYLYDPY (88 aa). Residues Cys53, Cys56, Cys60, and Cys119 each contribute to the [4Fe-4S] cluster site.

The protein belongs to the prokaryotic molybdopterin-containing oxidoreductase family. As to quaternary structure, probably composed of three subunits: TtrA, TtrB and TtrC. Precursor interacts with TtrD. [4Fe-4S] cluster serves as cofactor. Mo-bis(molybdopterin guanine dinucleotide) is required as a cofactor. Exported by the Tat system. The position of the signal peptide cleavage has not been experimentally proven.

It localises to the cell membrane. Its function is as follows. Part of a membrane-bound tetrathionate reductase that catalyzes the reduction of tetrathionate to thiosulfate. TtrA is the catalytic subunit. The sequence is that of Tetrathionate reductase subunit A (ttrA) from Archaeoglobus fulgidus (strain ATCC 49558 / DSM 4304 / JCM 9628 / NBRC 100126 / VC-16).